A 113-amino-acid chain; its full sequence is Nucleoid-associated protein Syncc9902_0023 (113 aa).

This sequence belongs to the YbaB/EbfC family. Homodimer.

It is found in the cytoplasm. It localises to the nucleoid. Binds to DNA and alters its conformation. May be involved in regulation of gene expression, nucleoid organization and DNA protection. The sequence is that of Nucleoid-associated protein Syncc9902_0023 from Synechococcus sp. (strain CC9902).